The primary structure comprises 119 residues: Glucitol operon activator protein (119 aa).

A DNA-binding region (H-T-H motif) is located at residues 23-29 (QISRFNR).

Positive regulator for glucitol operon expression. The chain is Glucitol operon activator protein (gutM) from Escherichia coli (strain K12).